Reading from the N-terminus, the 626-residue chain is Chaperone protein HtpG (626 aa).

The a; substrate-binding stretch occupies residues 1–341 (MAKKEFKAES…SEDLSLNISR (341 aa)). Positions 342–552 (EMLQHDRQLK…DGEVTIEMEK (211 aa)) are b. The tract at residues 553-626 (ILNAMPDSQN…FTNNICKVMV (74 aa)) is c.

Belongs to the heat shock protein 90 family. Homodimer.

The protein resides in the cytoplasm. In terms of biological role, molecular chaperone. Has ATPase activity. This Bacillus subtilis (strain 168) protein is Chaperone protein HtpG.